A 312-amino-acid polypeptide reads, in one-letter code: Pre-mRNA-splicing factor 38A (312 aa).

The interval 1–179 (MANRTVKDAH…VLEEAEQLEP (179 aa)) is N-terminal protein interaction domain. Phosphoserine occurs at positions 11, 193, 194, 209, and 226. Positions 170-204 (VLEEAEQLEPRVSALEEDMDDVESSEEEEEEDEKL) form a coiled coil. Residues 181–312 (VSALEEDMDD…SHKKSRRGNE (132 aa)) are disordered. Over residues 184–202 (LEEDMDDVESSEEEEEEDE) the composition is skewed to acidic residues. The span at 203–224 (KLERVPSPDHRRRSYRDLDKPR) shows a compositional bias: basic and acidic residues. 2 stretches are compositionally biased toward basic residues: residues 225-294 (RSPA…RSHS) and 301-312 (KKSHKKSRRGNE).

It belongs to the PRP38 family. As to quaternary structure, component of the spliceosome B complex. Interacts (via N-terminal interaction domain) with ZMAT2 and MFAP1.

Its subcellular location is the nucleus. Functionally, involved in pre-mRNA splicing as a component of the spliceosome. This chain is Pre-mRNA-splicing factor 38A (Prpf38a), found in Mus musculus (Mouse).